Here is a 691-residue protein sequence, read N- to C-terminus: Elongation factor G (691 aa).

The 275-residue stretch at Glu8–Val282 folds into the tr-type G domain. GTP-binding positions include Ala17 to Thr24, Asp81 to His85, and Asn135 to Asp138.

It belongs to the TRAFAC class translation factor GTPase superfamily. Classic translation factor GTPase family. EF-G/EF-2 subfamily.

It localises to the cytoplasm. Functionally, catalyzes the GTP-dependent ribosomal translocation step during translation elongation. During this step, the ribosome changes from the pre-translocational (PRE) to the post-translocational (POST) state as the newly formed A-site-bound peptidyl-tRNA and P-site-bound deacylated tRNA move to the P and E sites, respectively. Catalyzes the coordinated movement of the two tRNA molecules, the mRNA and conformational changes in the ribosome. The chain is Elongation factor G from Prochlorococcus marinus (strain MIT 9312).